The primary structure comprises 230 residues: 3-dehydroquinate dehydratase (230 aa).

3-dehydroquinate contacts are provided by residues Ser26, Glu51 to Arg53, and Arg84. His127 acts as the Proton donor/acceptor in catalysis. Residue Lys150 is the Schiff-base intermediate with substrate of the active site. Arg190, Thr209, and Gln213 together coordinate 3-dehydroquinate.

It belongs to the type-I 3-dehydroquinase family. In terms of assembly, homodimer.

The enzyme catalyses 3-dehydroquinate = 3-dehydroshikimate + H2O. Its pathway is metabolic intermediate biosynthesis; chorismate biosynthesis; chorismate from D-erythrose 4-phosphate and phosphoenolpyruvate: step 3/7. In terms of biological role, involved in the third step of the chorismate pathway, which leads to the biosynthesis of aromatic amino acids. Catalyzes the cis-dehydration of 3-dehydroquinate (DHQ) and introduces the first double bond of the aromatic ring to yield 3-dehydroshikimate. In Thermoplasma volcanium (strain ATCC 51530 / DSM 4299 / JCM 9571 / NBRC 15438 / GSS1), this protein is 3-dehydroquinate dehydratase.